The sequence spans 100 residues: Small ribosomal subunit protein uS14 (100 aa).

Belongs to the universal ribosomal protein uS14 family. As to quaternary structure, part of the 30S ribosomal subunit. Contacts proteins S3 and S10.

Binds 16S rRNA, required for the assembly of 30S particles and may also be responsible for determining the conformation of the 16S rRNA at the A site. This chain is Small ribosomal subunit protein uS14, found in Trichodesmium erythraeum (strain IMS101).